We begin with the raw amino-acid sequence, 288 residues long: Aminoglycoside N(3)-acetyltransferase VII (288 aa).

It belongs to the antibiotic N-acetyltransferase family.

It carries out the reaction a 2-deoxystreptamine antibiotic + acetyl-CoA = an N(3)-acetyl-2-deoxystreptamine antibiotic + CoA + H(+). Functionally, resistance to paromomycin. In Streptomyces paromomycinus (Streptomyces rimosus subsp. paromomycinus), this protein is Aminoglycoside N(3)-acetyltransferase VII (aacC7).